The chain runs to 294 residues: Cytidine deaminase (294 aa).

CMP/dCMP-type deaminase domains are found at residues 48 to 168 and 187 to 294; these read DDDA…FGPT and AETD…RVTF. 89-91 is a binding site for substrate; it reads NME. His-102 is a Zn(2+) binding site. The active-site Proton donor is the Glu-104. Zn(2+)-binding residues include Cys-129 and Cys-132.

The protein belongs to the cytidine and deoxycytidylate deaminase family. As to quaternary structure, homodimer. The cofactor is Zn(2+).

It catalyses the reaction cytidine + H2O + H(+) = uridine + NH4(+). The catalysed reaction is 2'-deoxycytidine + H2O + H(+) = 2'-deoxyuridine + NH4(+). Its function is as follows. This enzyme scavenges exogenous and endogenous cytidine and 2'-deoxycytidine for UMP synthesis. The protein is Cytidine deaminase of Yersinia pseudotuberculosis serotype IB (strain PB1/+).